The sequence spans 398 residues: Tryptophan synthase beta chain (398 aa).

Position 88 is an N6-(pyridoxal phosphate)lysine (K88).

It belongs to the TrpB family. As to quaternary structure, tetramer of two alpha and two beta chains. The cofactor is pyridoxal 5'-phosphate.

It catalyses the reaction (1S,2R)-1-C-(indol-3-yl)glycerol 3-phosphate + L-serine = D-glyceraldehyde 3-phosphate + L-tryptophan + H2O. Its pathway is amino-acid biosynthesis; L-tryptophan biosynthesis; L-tryptophan from chorismate: step 5/5. Its function is as follows. The beta subunit is responsible for the synthesis of L-tryptophan from indole and L-serine. This chain is Tryptophan synthase beta chain, found in Actinobacillus succinogenes (strain ATCC 55618 / DSM 22257 / CCUG 43843 / 130Z).